A 354-amino-acid polypeptide reads, in one-letter code: S-adenosylmethionine:tRNA ribosyltransferase-isomerase (354 aa).

The protein belongs to the QueA family. Monomer.

It localises to the cytoplasm. It carries out the reaction 7-aminomethyl-7-carbaguanosine(34) in tRNA + S-adenosyl-L-methionine = epoxyqueuosine(34) in tRNA + adenine + L-methionine + 2 H(+). It functions in the pathway tRNA modification; tRNA-queuosine biosynthesis. Its function is as follows. Transfers and isomerizes the ribose moiety from AdoMet to the 7-aminomethyl group of 7-deazaguanine (preQ1-tRNA) to give epoxyqueuosine (oQ-tRNA). The chain is S-adenosylmethionine:tRNA ribosyltransferase-isomerase from Azorhizobium caulinodans (strain ATCC 43989 / DSM 5975 / JCM 20966 / LMG 6465 / NBRC 14845 / NCIMB 13405 / ORS 571).